The sequence spans 486 residues: Ribulose bisphosphate carboxylase large chain 1 (486 aa).

Substrate contacts are provided by asparagine 125 and threonine 175. Residue lysine 177 is the Proton acceptor of the active site. Position 179 (lysine 179) interacts with substrate. Mg(2+)-binding residues include lysine 203, aspartate 205, and glutamate 206. An N6-carboxylysine modification is found at lysine 203. The Proton acceptor role is filled by histidine 295. 3 residues coordinate substrate: arginine 296, histidine 328, and serine 380.

It belongs to the RuBisCO large chain family. Type I subfamily. Heterohexadecamer of 8 large chains and 8 small chains. Mg(2+) is required as a cofactor.

It carries out the reaction 2 (2R)-3-phosphoglycerate + 2 H(+) = D-ribulose 1,5-bisphosphate + CO2 + H2O. The catalysed reaction is D-ribulose 1,5-bisphosphate + O2 = 2-phosphoglycolate + (2R)-3-phosphoglycerate + 2 H(+). Its function is as follows. RuBisCO catalyzes two reactions: the carboxylation of D-ribulose 1,5-bisphosphate, the primary event in carbon dioxide fixation, as well as the oxidative fragmentation of the pentose substrate. Both reactions occur simultaneously and in competition at the same active site. The chain is Ribulose bisphosphate carboxylase large chain 1 from Bradyrhizobium sp. (strain ORS 278).